The chain runs to 359 residues: Large ribosomal subunit protein uL3 (359 aa).

A disordered region spans residues 336-359 (VRPPAKRPPAEAPQITYISRESKQ).

This sequence belongs to the universal ribosomal protein uL3 family. In terms of assembly, part of the 50S ribosomal subunit. Forms a cluster with proteins L14 and L24e.

In terms of biological role, one of the primary rRNA binding proteins, it binds directly near the 3'-end of the 23S rRNA, where it nucleates assembly of the 50S subunit. The chain is Large ribosomal subunit protein uL3 from Thermococcus sibiricus (strain DSM 12597 / MM 739).